Here is a 95-residue protein sequence, read N- to C-terminus: uncharacterized protein (95 aa).

Residues 45–65 (WLSGLAFVLQAALVMPVVLAF) traverse the membrane as a helical segment.

It is found in the membrane. This is an uncharacterized protein from Mycobacterium leprae (strain TN).